Reading from the N-terminus, the 421-residue chain is Testin (421 aa).

Positions 92-199 (MILTNPVAAK…GDVKLPYEMG (108 aa)) constitute a PET domain. A disordered region spans residues 133–164 (EKQPVAGSEGAQYRKKQLAKQLPAHDQDPSKC). Over residues 155–164 (PAHDQDPSKC) the composition is skewed to basic and acidic residues. LIM zinc-binding domains lie at 234 to 297 (YFCY…CDSE), 299 to 359 (PRCA…NHAV), and 362 to 421 (QGCH…KMMS).

This sequence belongs to the prickle / espinas / testin family. As to quaternary structure, interacts via LIM domain 1 with ZYX. Interacts (via LIM domain 3) with ENAH and VASP. Interacts with ALKBH4, talin, actin, alpha-actinin, GRIP1 and PXN. Interacts (via LIM domain 2) with ACTL7A (via N-terminus). Heterodimer with ACTL7A; the heterodimer interacts with ENAH to form a heterotrimer.

Its subcellular location is the cytoplasm. The protein localises to the cell junction. It is found in the focal adhesion. Its function is as follows. Scaffold protein that may play a role in cell adhesion, cell spreading and in the reorganization of the actin cytoskeleton. Plays a role in the regulation of cell proliferation. May act as a tumor suppressor. The protein is Testin (TES) of Oryctolagus cuniculus (Rabbit).